A 559-amino-acid polypeptide reads, in one-letter code: Dihydroxy-acid dehydratase (559 aa).

Residue Cys49 participates in [2Fe-2S] cluster binding. Position 81 (Asp81) interacts with Mg(2+). A [2Fe-2S] cluster-binding site is contributed by Cys122. Asp123 and Lys124 together coordinate Mg(2+). N6-carboxylysine is present on Lys124. Position 194 (Cys194) interacts with [2Fe-2S] cluster. Glu446 contributes to the Mg(2+) binding site. Ser472 serves as the catalytic Proton acceptor.

It belongs to the IlvD/Edd family. In terms of assembly, homodimer. [2Fe-2S] cluster serves as cofactor. Requires Mg(2+) as cofactor.

The enzyme catalyses (2R)-2,3-dihydroxy-3-methylbutanoate = 3-methyl-2-oxobutanoate + H2O. It carries out the reaction (2R,3R)-2,3-dihydroxy-3-methylpentanoate = (S)-3-methyl-2-oxopentanoate + H2O. It participates in amino-acid biosynthesis; L-isoleucine biosynthesis; L-isoleucine from 2-oxobutanoate: step 3/4. It functions in the pathway amino-acid biosynthesis; L-valine biosynthesis; L-valine from pyruvate: step 3/4. Functions in the biosynthesis of branched-chain amino acids. Catalyzes the dehydration of (2R,3R)-2,3-dihydroxy-3-methylpentanoate (2,3-dihydroxy-3-methylvalerate) into 2-oxo-3-methylpentanoate (2-oxo-3-methylvalerate) and of (2R)-2,3-dihydroxy-3-methylbutanoate (2,3-dihydroxyisovalerate) into 2-oxo-3-methylbutanoate (2-oxoisovalerate), the penultimate precursor to L-isoleucine and L-valine, respectively. The polypeptide is Dihydroxy-acid dehydratase (Prochlorococcus marinus (strain MIT 9515)).